The sequence spans 56 residues: Large ribosomal subunit protein bL33 (56 aa).

Residues 1–12 are compositionally biased toward basic and acidic residues; that stretch reads MATKGGREKIKL. The segment at 1-28 is disordered; that stretch reads MATKGGREKIKLESTAGTGHFYTTSKNK. The segment covering 15–25 has biased composition (polar residues); it reads TAGTGHFYTTS.

It belongs to the bacterial ribosomal protein bL33 family.

This chain is Large ribosomal subunit protein bL33, found in Albidiferax ferrireducens (strain ATCC BAA-621 / DSM 15236 / T118) (Rhodoferax ferrireducens).